The chain runs to 331 residues: MLSPERLALPDYEYLAQRHVLTYMEDAVCQLLENKEDISQYGIARFFTEYFNSVCQGTHILFREFSFIQATPHNRASFLRAFWRCFRTVGKNGDLLTMREYHCLLQLLCPDFPLELTQKAARIVLMDDAMDCLMSFSDFLFAFQIQFYYSEFLESVAAIYQDLLSGKNPNTVIVPTSSSGQHRQRPALGDAGMLDGVEASLFCQRLENLCDRHKYSCPPPALVKEILSNVQRLTFYGFLVALSKHHGINQALGALPDKGDLMHDPAMDEELERLLVQVPGLVNSITATSEASCLPSRTPPRVGSPWKPLHRSRKLDAESDGSTEETDESET.

Positions 1–111 (MLSPERLALP…HCLLQLLCPD (111 aa)) are required for interaction with PCM1. A required for interaction with TPGS1, LRRC49, and TTLL1 region spans residues 1–225 (MLSPERLALP…SCPPPALVKE (225 aa)). A required for interaction with TPGS2 region spans residues 112-331 (FPLELTQKAA…STEETDESET (220 aa)). A disordered region spans residues 292–331 (SCLPSRTPPRVGSPWKPLHRSRKLDAESDGSTEETDESET). Acidic residues predominate over residues 318–331 (ESDGSTEETDESET). Position 319 is a phosphoserine (Ser-319).

The protein belongs to the CSTPP1 family. In terms of assembly, interacts with PCM1. Interacts with TTLL1, TPGS1, TPGS2 and LRRC49; the interactions link CSTPP1 to the complex TPGC. Binds to alpha-tubulin.

The protein resides in the cytoplasm. Its subcellular location is the cytoskeleton. It is found in the microtubule organizing center. It localises to the centrosome. The protein localises to the centriolar satellite. Functionally, regulator of the tubulin polyglutamylase complex (TPGC) that controls cytoskeletal organization, nuclear shape, and cilium disassembly by balancing microtubule and actin assembly. Regulates the assembly and stability of the TPGC and thereby modulates polyglutamylation of the microtubule, which antagonizes MAP4 binding. This is Centriolar satellite-associated tubulin polyglutamylase complex regulator 1 (Cstpp1) from Rattus norvegicus (Rat).